We begin with the raw amino-acid sequence, 438 residues long: Putative F-box/FBD/LRR-repeat protein At5g44950 (438 aa).

In terms of domain architecture, F-box spans 3–49; the sequence is RDRISELPDGLLNHILMYLHIEESIRTSVLSSRWRKLWLKVPGLDVN. LRR repeat units lie at residues 246-275 and 286-310; these read LSSL…DLTK and ISSV…KIGQ. Residues 355 to 407 form the FBD domain; sequence PEQIDFTNLPRCLISTLEYVEIKQLTMREESGIKLVKYFLENSAVLKKLTLSF.

This chain is Putative F-box/FBD/LRR-repeat protein At5g44950, found in Arabidopsis thaliana (Mouse-ear cress).